We begin with the raw amino-acid sequence, 1250 residues long: MGHSRRPAGGEKKSRGFGRSKAAADVGDGRQTGGKPQVKKATFESTKKKEIGVSDLTLLSKISNEAINDNLKLRFEHDEIYTYIGHVLVSVNPFQDLGIYTDNVLQSYRGKNRLEVPPHVFAVAESAYYNMKSYKDNQCVIISGESGAGKTEAAKRIMQYIASVSGGTDSSIQHTKEMVLATNPLLESFGNAKTLRNNNSSRFGKYLELEFNTNGEPVGANITNYLLEKSRVVGQITNERNFHIFYQFTKAAPQKYRDLFGIQQPQSYLYTSRSKCYDVPGVDDSAEFRDTLNAMNVIGMTEGEQDDVFRMLAAILWIGNVQFAEDDSGNAVITDQSVVDYVAYLLEVDAAQVNKAFTIRVMETARGGRRGSVYEVPLNTVQALAVRDALAKAIYFNLFDWIVQRVNASLTARGEVANSIGILDIYGFEIFEKNSFEQLCINYVNEKLQQIFIQLTLKAEQDEYAREQIQWTPIKYFDNKVVCSLIEDKRPPGVFAALNDACATAHADSSAADNTFVGRLNFLSQNPNFENRQGQFIVKHYAGDVSYAVAGMTDKNKDQLLKDLLNLVGTSGNQFVHTLFPEQVNQDDKRRPPTASDKIKASANDLVATLMKAQPSYIRTIKPNDNKAPKEYNVGNVLHQIKYLGLQENVRIRRAGFAYRQTFDKFVERFYLLSPKTSYAGDYTWTGDAESGARQILKDTSIPAEEYQMGITKVFVKTPETLFALEAMRDRYWHNMAIRIQRAWRNYLRYRTECAIRIQRFWRRTTGGLEFIKLRDQGHQLLNGRKERRRMSLLGSRRFLGDYIGVGNKGGPGEMVRNGAGISGSEDILFSCRGEVLVSKFGRSSKPAPRILVLTNRHVYIIAQNLVNNQLVISSERTIPIGAIKAVSASNLKDDWFSIVVGSPQEPDPLVNCVFKTEFFTHLNNTLHGQLNLKIADHIEYNKKPGKLATVKVVKDPAVARDDSYKSGTIHTGPGEPANSVSKPTPRPKQVSARPVTKGKLLRPGGPGGGPSKLAARPTPAAQPLPRATPQPAAPQPAARAVPQPVAAVAASHTRTGSTASVRAPPPPPPAAAPAPKKPTAKVLYDFNSQQSNELSIKAGEIVQIVSKEGNGWWLCMNMTTSAQGWTPEAYLEEQVAPTPKPAPPPPPPAAPRSTPAPATNGAAAAAKAKPAPPAPPAKRPNMAARKAVPTPPPAPRDSAVSMNSHDSSGGSGRGTPNSMSNASLAGGLAEALRARQHAMQGKQDDDDDW.

The tract at residues 1–43 is disordered; the sequence is MGHSRRPAGGEKKSRGFGRSKAAADVGDGRQTGGKPQVKKATF. The 680-residue stretch at 51-730 folds into the Myosin motor domain; sequence IGVSDLTLLS…TLFALEAMRD (680 aa). Residue 144 to 151 participates in ATP binding; sequence GESGAGKT. Ser-372 bears the Phosphoserine mark. Positions 419 to 501 are actin-binding; sequence SIGILDIYGF…PGVFAALNDA (83 aa). IQ domains lie at 734–754 and 755–780; these read HNMA…RTEC and AIRI…QGHQ. Residues 788–978 form the TH1 domain; it reads RRRMSLLGSR…TIHTGPGEPA (191 aa). Disordered stretches follow at residues 962–1079 and 1126–1250; these read DDSY…PKKP and WTPE…DDDW. Positions 1021 to 1035 are enriched in pro residues; the sequence is AAQPLPRATPQPAAP. Residues 1036–1051 show a composition bias toward low complexity; sequence QPAARAVPQPVAAVAA. 2 stretches are compositionally biased toward pro residues: residues 1064 to 1077 and 1139 to 1151; these read APPP…PAPK and TPKP…PPAA. Residues 1076–1137 enclose the SH3 domain; it reads PKKPTAKVLY…PEAYLEEQVA (62 aa). The segment covering 1152–1170 has biased composition (low complexity); the sequence is PRSTPAPATNGAAAAAKAK. Polar residues predominate over residues 1201 to 1222; the sequence is VSMNSHDSSGGSGRGTPNSMSN. The segment covering 1223–1232 has biased composition (low complexity); sequence ASLAGGLAEA.

This sequence belongs to the TRAFAC class myosin-kinesin ATPase superfamily. Myosin family. Phosphorylation of the TEDS site (Ser-372) is required for the polarization of the actin cytoskeleton. Phosphorylation probably activates the myosin-I ATPase activity.

The protein resides in the cytoplasm. It localises to the cytoskeleton. Its subcellular location is the actin patch. Its function is as follows. Type-I myosin implicated in the organization of the actin cytoskeleton. Required for proper actin cytoskeleton polarization. At the cell cortex, assembles in patch-like structures together with proteins from the actin-polymerizing machinery and promotes actin assembly. Functions as actin nucleation-promoting factor (NPF) for the Arp2/3 complex. Plays an important role in polarized growth, spore germination, hyphal morphogenesis, and septal wall formation. In Neosartorya fischeri (strain ATCC 1020 / DSM 3700 / CBS 544.65 / FGSC A1164 / JCM 1740 / NRRL 181 / WB 181) (Aspergillus fischerianus), this protein is Myosin-1 (myoA).